The following is a 1032-amino-acid chain: Exportin-T (1032 aa).

This sequence belongs to the exportin family.

The protein resides in the nucleus. Its subcellular location is the cytoplasm. Functionally, tRNA nucleus export receptor which facilitates tRNA translocation across the nuclear pore complex. Involved in pre-tRNA splicing, probably by affecting the interaction of pre-tRNA with splicing endonuclease. This is Exportin-T (los1) from Aspergillus fumigatus (strain ATCC MYA-4609 / CBS 101355 / FGSC A1100 / Af293) (Neosartorya fumigata).